We begin with the raw amino-acid sequence, 93 residues long: YcgL domain-containing protein VIBHAR_01387 (93 aa).

Residues 1–84 (MLCSIYKSSR…PPENLLEKYK (84 aa)) form the YcgL domain.

This chain is YcgL domain-containing protein VIBHAR_01387, found in Vibrio campbellii (strain ATCC BAA-1116).